Reading from the N-terminus, the 524-residue chain is GMP synthase [glutamine-hydrolyzing] (524 aa).

Residues 7–196 enclose the Glutamine amidotransferase type-1 domain; the sequence is PVLVVDFGAQ…LHELAGIPAS (190 aa). The active-site Nucleophile is Cys-84. Active-site residues include His-170 and Glu-172. The 202-residue stretch at 197-398 folds into the GMPS ATP-PPase domain; the sequence is WTPSNIADVL…LGLPEEIVAR (202 aa). 224–230 is an ATP binding site; sequence SGGVDSA.

Homodimer.

The catalysed reaction is XMP + L-glutamine + ATP + H2O = GMP + L-glutamate + AMP + diphosphate + 2 H(+). Its pathway is purine metabolism; GMP biosynthesis; GMP from XMP (L-Gln route): step 1/1. Functionally, catalyzes the synthesis of GMP from XMP. This chain is GMP synthase [glutamine-hydrolyzing], found in Nocardia farcinica (strain IFM 10152).